The sequence spans 201 residues: Holliday junction branch migration complex subunit RuvA (201 aa).

Residues 1-64 (MIGRLHGKII…EDAHLLFGFA (64 aa)) form a domain I region. Residues 65 to 143 (QKQDRTLFRE…GVAQSDFFEE (79 aa)) are domain II. Residues 144 to 154 (HSVETIVATHS) form a flexible linker region. Residues 154–201 (SHDPADEARDALVALGYKLADAEKMIKKVNKAGATSEQLIREALKASL) form a domain III region.

It belongs to the RuvA family. In terms of assembly, homotetramer. Forms an RuvA(8)-RuvB(12)-Holliday junction (HJ) complex. HJ DNA is sandwiched between 2 RuvA tetramers; dsDNA enters through RuvA and exits via RuvB. An RuvB hexamer assembles on each DNA strand where it exits the tetramer. Each RuvB hexamer is contacted by two RuvA subunits (via domain III) on 2 adjacent RuvB subunits; this complex drives branch migration. In the full resolvosome a probable DNA-RuvA(4)-RuvB(12)-RuvC(2) complex forms which resolves the HJ.

The protein resides in the cytoplasm. The RuvA-RuvB-RuvC complex processes Holliday junction (HJ) DNA during genetic recombination and DNA repair, while the RuvA-RuvB complex plays an important role in the rescue of blocked DNA replication forks via replication fork reversal (RFR). RuvA specifically binds to HJ cruciform DNA, conferring on it an open structure. The RuvB hexamer acts as an ATP-dependent pump, pulling dsDNA into and through the RuvAB complex. HJ branch migration allows RuvC to scan DNA until it finds its consensus sequence, where it cleaves and resolves the cruciform DNA. This is Holliday junction branch migration complex subunit RuvA from Actinobacillus pleuropneumoniae serotype 7 (strain AP76).